Consider the following 349-residue polypeptide: ATPase GET3 (349 aa).

26–33 (KGGVGKTT) contacts ATP. Asp-57 is a catalytic residue. 2 residues coordinate ATP: Glu-242 and Asn-269. Zn(2+)-binding residues include Cys-281 and Cys-284.

This sequence belongs to the arsA ATPase family. Homodimer. Component of the Golgi to ER traffic (GET) complex, which is composed of GET1, GET2 and GET3. Within the complex, GET1 and GET2 form a heterotetramer which is stabilized by phosphatidylinositol binding and which binds to the GET3 homodimer. Interacts with the chloride channel protein GEF1.

Its subcellular location is the cytoplasm. It localises to the endoplasmic reticulum. It is found in the golgi apparatus. ATPase required for the post-translational delivery of tail-anchored (TA) proteins to the endoplasmic reticulum. Recognizes and selectively binds the transmembrane domain of TA proteins in the cytosol. This complex then targets to the endoplasmic reticulum by membrane-bound receptors GET1 and GET2, where the tail-anchored protein is released for insertion. This process is regulated by ATP binding and hydrolysis. ATP binding drives the homodimer towards the closed dimer state, facilitating recognition of newly synthesized TA membrane proteins. ATP hydrolysis is required for insertion. Subsequently, the homodimer reverts towards the open dimer state, lowering its affinity for the GET1-GET2 receptor, and returning it to the cytosol to initiate a new round of targeting. Cooperates with the HDEL receptor ERD2 to mediate the ATP-dependent retrieval of resident ER proteins that contain a C-terminal H-D-E-L retention signal from the Golgi to the ER. Involved in low-level resistance to the oxyanions arsenite and arsenate, and in heat tolerance. This is ATPase GET3 from Lodderomyces elongisporus (strain ATCC 11503 / CBS 2605 / JCM 1781 / NBRC 1676 / NRRL YB-4239) (Yeast).